We begin with the raw amino-acid sequence, 1495 residues long: Ras GTPase-activating-like protein IQG1 (1495 aa).

The Calponin-homology (CH) domain maps to 108–221; the sequence is LCRVSEVKIW…ILISMINKKW (114 aa). Phosphothreonine is present on threonine 264. Phosphoserine is present on serine 268. The residue at position 299 (threonine 299) is a Phosphothreonine. IQ domains lie at 447-467, 538-567, 568-597, 599-628, 629-658, 687-716, and 717-746; these read EQDILRFQACLRGNKFRVLSS, SHYPLTKLQSYMRASYVRKKVMSLNTKLND, ERESIMKFSAIIRGNVVRCSEDAILSAVHD, HKENISKLQSLIRGIFTRSCLASIIYSLGK, ENCNIIQLSACIRGNAVRHKVQSLFAPENN, EYNNLALFQAFSRGALVRESLDQKSSFYKR, and NVRSVIMIQSWIRKSLQRSAYLELLDCPNP. A coiled-coil region spans residues 759 to 798; it reads NGTATIEEVQNQLESCQASLDSENMKKERLLKSIRQQLNI. One can recognise a Ras-GAP domain in the interval 876–1100; it reads SYFTRFVCEM…PHIKDVLYNV (225 aa).

Interacts with AFR1. Interacts with AKR1. Interacts with activated CDC42. Interacts with calmodulin CMD1. Interacts with myosin MYO1 and its light chain MLC1. Interacts with BUD4. Interacts with INN1. Interacts with SEC3. Interacts with TEM1.

Its subcellular location is the bud neck. Its function is as follows. Required for the assembly and the contraction of the actomyosin ring at the bud neck during cytokinesis. Seems to be involved in additional tasks during cell division like axial bud-site selection and targeted secretion by recruiting the spatial landmark BUD4, the septin CDC12 and the secretion landmark SEC3 to the bud neck. May be regulated by calcium ions. This Saccharomyces cerevisiae (strain ATCC 204508 / S288c) (Baker's yeast) protein is Ras GTPase-activating-like protein IQG1 (IQG1).